We begin with the raw amino-acid sequence, 298 residues long: MAATLRELRGRIRSVGSIKKITKAQELIATSRIARAQVRLESARPYAVDITRMLTTLAYEAVLDHPLLVASATPKRAGVLVVSSDRGLCGAYNANVFRRSEELFSLLRAEGKTPILYVVGRKALNYYTFRNWGIAESWTGFSEQPKYENAAKIASTLVDVFMLGSSESDAGVDELHIVFTEFKSMLSQSTKARRMAPMVVEYVEESKLPRTLYSFEPDATTLFEALLPRYLTIRVYAAMLESAASELASRQRAMKSATDNADDLIKALTLEANRERQAQITQEISEIVGGANALANAR.

Belongs to the ATPase gamma chain family. In terms of assembly, F-type ATPases have 2 components, CF(1) - the catalytic core - and CF(0) - the membrane proton channel. CF(1) has five subunits: alpha(3), beta(3), gamma(1), delta(1), epsilon(1). CF(0) has three main subunits: a, b and c.

The protein resides in the cell membrane. Produces ATP from ADP in the presence of a proton gradient across the membrane. The gamma chain is believed to be important in regulating ATPase activity and the flow of protons through the CF(0) complex. This is ATP synthase gamma chain from Mycobacterium leprae (strain Br4923).